The chain runs to 62 residues: Conotoxin Im11.9 (62 aa).

A signal peptide spans 1 to 22; it reads MFRVTSVLLVIVLLNLVVLTNA. Cystine bridges form between Cys23-Cys33, Cys27-Cys38, Cys32-Cys41, and Cys37-Cys46. The propeptide occupies 23–49; sequence CHMDCSKMTCCSGICCFYCGRPMCPGT.

It belongs to the conotoxin I2 superfamily. In terms of tissue distribution, expressed by the venom duct.

The protein resides in the secreted. Probable neurotoxin. This is Conotoxin Im11.9 from Conus imperialis (Imperial cone).